A 497-amino-acid polypeptide reads, in one-letter code: RNA polymerase sigma factor SigA (497 aa).

Disordered stretches follow at residues 1–20 and 62–86; these read MSTDKKTLGEKPNSTKPELS and KTLHENKESDVPKKRRGRKPKHAPL. A compositionally biased stretch (basic and acidic residues) spans 63 to 73; it reads TLHENKESDVP. Over residues 74–84 the composition is skewed to basic residues; it reads KKRRGRKPKHA. The sigma-70 factor domain-2 stretch occupies residues 250–320; it reads LVTSNLRLVV…TRAIADQART (71 aa). Residues 274 to 277 carry the Interaction with polymerase core subunit RpoC motif; it reads DLIQ. The sigma-70 factor domain-3 stretch occupies residues 329-410; sequence ETINRLAKAE…DTDAQTPDEF (82 aa). Residues 423 to 478 form a sigma-70 factor domain-4 region; it reads LLNNNLSEQEELIVRMRIGMPPYNEPKTLDEVGQKILIPREKIRQIENKAIRKLRH. The H-T-H motif DNA-binding region spans 451–470; the sequence is LDEVGQKILIPREKIRQIEN.

It belongs to the sigma-70 factor family. RpoD/SigA subfamily. Interacts transiently with the RNA polymerase catalytic core.

It localises to the cytoplasm. In terms of biological role, sigma factors are initiation factors that promote the attachment of RNA polymerase to specific initiation sites and are then released. This sigma factor is the primary sigma factor during exponential growth. The chain is RNA polymerase sigma factor SigA from Mycoplasma genitalium (strain ATCC 33530 / DSM 19775 / NCTC 10195 / G37) (Mycoplasmoides genitalium).